The following is a 284-amino-acid chain: Riboflavin transporter (284 aa).

EamA domains lie at 2–129 (VAAC…LIII) and 141–273 (LLPI…SLYL). Transmembrane regions (helical) follow at residues 26–46 (SVII…PLLV), 58–78 (FGLH…WIYA), 82–102 (VPIW…ILCA), 115–135 (LLTT…WSDS), 136–156 (YTVY…YSVM), 167–187 (ASIS…LWLA), 195–215 (ITAP…FTAL), and 247–267 (GWIV…ALII).

Belongs to the drug/metabolite transporter (DMT) superfamily. 10 TMS drug/metabolite exporter (DME) (TC 2.A.7.3) family.

It localises to the cell membrane. In terms of biological role, transports riboflavin into the cell. This chain is Riboflavin transporter, found in Brucella anthropi (strain ATCC 49188 / DSM 6882 / CCUG 24695 / JCM 21032 / LMG 3331 / NBRC 15819 / NCTC 12168 / Alc 37) (Ochrobactrum anthropi).